Here is a 455-residue protein sequence, read N- to C-terminus: Probable glycine dehydrogenase (decarboxylating) subunit 1 (455 aa).

This sequence belongs to the GcvP family. N-terminal subunit subfamily. In terms of assembly, the glycine cleavage system is composed of four proteins: P, T, L and H. In this organism, the P 'protein' is a heterodimer of two subunits.

The catalysed reaction is N(6)-[(R)-lipoyl]-L-lysyl-[glycine-cleavage complex H protein] + glycine + H(+) = N(6)-[(R)-S(8)-aminomethyldihydrolipoyl]-L-lysyl-[glycine-cleavage complex H protein] + CO2. Its function is as follows. The glycine cleavage system catalyzes the degradation of glycine. The P protein binds the alpha-amino group of glycine through its pyridoxal phosphate cofactor; CO(2) is released and the remaining methylamine moiety is then transferred to the lipoamide cofactor of the H protein. This Saccharolobus islandicus (strain Y.G.57.14 / Yellowstone #1) (Sulfolobus islandicus) protein is Probable glycine dehydrogenase (decarboxylating) subunit 1.